The sequence spans 197 residues: Large ribosomal subunit protein eL15 (197 aa).

Basic residues-rich tracts occupy residues 70 to 90 (PKGG…RMGK), 163 to 179 (RGKT…RKRG), and 187 to 197 (PSLRAHRRRGK). Disordered regions lie at residues 70–99 (PKGG…GKSK) and 163–197 (RGKT…RRGK).

The protein belongs to the eukaryotic ribosomal protein eL15 family.

This is Large ribosomal subunit protein eL15 from Methanopyrus kandleri (strain AV19 / DSM 6324 / JCM 9639 / NBRC 100938).